Consider the following 201-residue polypeptide: MNVPWENAHGGALYCLIRGDEFSAWHRLLFQRPGCAESVLACRHFLDGSPVARCSYPEEYHPCVISRIALLCDSVGWTADVERISAWLNGLDRETYELVFAAIEVLEEEGPALGCPLVDTVRGSRHKNMKELRPGSQGRSEVRILFAFDPARQAIMLAAGNKAGRWTQWYDEKIKAADEMFAEHLAQFEDTKPKRRKRKKG.

It belongs to the mycobacterial HigB family.

In terms of biological role, putative toxic component of a type II toxin-antitoxin (TA) system. Its cognate antitoxin would be HigA2. In Mycobacterium tuberculosis (strain ATCC 25618 / H37Rv), this protein is Putative toxin HigB2.